The primary structure comprises 220 residues: Putative cobalt transport protein CbiM (220 aa).

5 helical membrane-spanning segments follow: residues Gly-6–Tyr-26, Ala-43–Val-63, Gly-74–Leu-94, Leu-98–Ile-118, and Ile-182–Ile-202.

The protein belongs to the CbiM family. In terms of assembly, forms an energy-coupling factor (ECF) transporter complex composed of an ATP-binding protein (A component, CbiO), a transmembrane protein (T component, CbiQ) and 2 possible substrate-capture proteins (S components, CbiM and CbiN) of unknown stoichimetry.

It is found in the cell membrane. It functions in the pathway cofactor biosynthesis; adenosylcobalamin biosynthesis. Functionally, part of the energy-coupling factor (ECF) transporter complex CbiMNOQ involved in cobalt import. In Haloquadratum walsbyi (strain DSM 16790 / HBSQ001), this protein is Putative cobalt transport protein CbiM.